A 78-amino-acid chain; its full sequence is Large ribosomal subunit protein bL28 (78 aa).

The disordered stretch occupies residues 1 to 21 (MSRVCQVTGKRPVSGNNRSHA).

The protein belongs to the bacterial ribosomal protein bL28 family.

The polypeptide is Large ribosomal subunit protein bL28 (Yersinia enterocolitica serotype O:8 / biotype 1B (strain NCTC 13174 / 8081)).